Reading from the N-terminus, the 506-residue chain is Maturase K (506 aa).

This sequence belongs to the intron maturase 2 family. MatK subfamily.

It localises to the plastid. The protein resides in the chloroplast. Its function is as follows. Usually encoded in the trnK tRNA gene intron. Probably assists in splicing its own and other chloroplast group II introns. This chain is Maturase K, found in Prunus dulcis (Almond).